A 400-amino-acid polypeptide reads, in one-letter code: Enolase (400 aa).

Residue Q153 coordinates (2R)-2-phosphoglycerate. The active-site Proton donor is E195. 3 residues coordinate Mg(2+): D231, E274, and D301. 4 residues coordinate (2R)-2-phosphoglycerate: K326, R355, S356, and K377. K326 acts as the Proton acceptor in catalysis.

This sequence belongs to the enolase family. Requires Mg(2+) as cofactor.

The protein resides in the cytoplasm. It localises to the secreted. The protein localises to the cell surface. It catalyses the reaction (2R)-2-phosphoglycerate = phosphoenolpyruvate + H2O. Its pathway is carbohydrate degradation; glycolysis; pyruvate from D-glyceraldehyde 3-phosphate: step 4/5. Catalyzes the reversible conversion of 2-phosphoglycerate (2-PG) into phosphoenolpyruvate (PEP). It is essential for the degradation of carbohydrates via glycolysis. The chain is Enolase from Halorubrum lacusprofundi (strain ATCC 49239 / DSM 5036 / JCM 8891 / ACAM 34).